A 143-amino-acid chain; its full sequence is Large ribosomal subunit protein bL17 (143 aa).

Residues 124–133 are compositionally biased toward basic and acidic residues; it reads GAGDRARLEA. Residues 124 to 143 form a disordered region; sequence GAGDRARLEAEGTDAEAAAA.

It belongs to the bacterial ribosomal protein bL17 family. As to quaternary structure, part of the 50S ribosomal subunit. Contacts protein L32.

The chain is Large ribosomal subunit protein bL17 from Mesorhizobium japonicum (strain LMG 29417 / CECT 9101 / MAFF 303099) (Mesorhizobium loti (strain MAFF 303099)).